A 362-amino-acid chain; its full sequence is G-prodeshotein coupled receptor 4 (362 aa).

Residues 1-8 (MGNHTWEG) lie on the Extracellular side of the membrane. An N-linked (GlcNAc...) asparagine glycan is attached at Asn3. The helical transmembrane segment at 9-45 (CHVDSRVDHLFPPSLYIFVIGVGLPTNCLALWAAYRQ) threads the bilayer. Cystine bridges form between Cys9–Cys258 and Cys90–Cys168. The Cytoplasmic segment spans residues 46 to 49 (VQQR). Residues 50–80 (NELGVYLMNLSIADLLYICTLPLWVDYFLHH) traverse the membrane as a helical segment. The Extracellular segment spans residues 81 to 85 (DNWIH). A helical membrane pass occupies residues 86 to 121 (GPGSCKLFGFIFYTNIYISIAFLCCISVDRYLAVAH). Residues 122–129 (PLRFARLR) are Cytoplasmic-facing. Residues 130–156 (RVKTAVAVSSVVWATELGANSAPLFHD) traverse the membrane as a helical segment. The Extracellular segment spans residues 157-172 (ELFRDRYNHTFCFEKF). The segment at 157–172 (ELFRDRYNHTFCFEKF) is extracellular loop 2 (ECL2). An N-linked (GlcNAc...) asparagine glycan is attached at Asn164. The chain crosses the membrane as a helical span at residues 173–210 (PMEGWVAWMNLYRVFVGFLFPWALMLLSYRGILRAVRG). The Cytoplasmic portion of the chain corresponds to 211–214 (SVST). A helical transmembrane segment spans residues 215–250 (ERQEKAKIKRLALSLIAIVLVCFAPYHVLLLSRSAI). At 251–260 (YLGRPWDCGF) the chain is on the extracellular side. Residues 261-289 (EERVFSAYHSSLAFTSLNCVADPILYCLV) traverse the membrane as a helical segment. Topologically, residues 290–362 (NEGARSDVAK…VQLKMLPPAQ (73 aa)) are cytoplasmic. The interval 335–362 (AKAMTGSWAATPPSQGDQVQLKMLPPAQ) is disordered.

The protein belongs to the G-protein coupled receptor 1 family.

The protein resides in the cell membrane. Activated by a network of residues that connects an extracellular-facing cavity to Glu-145, a conserved charged residue buried in the transmembrane core of the receptor. Protonation likely drives conformational changes in extracellular loop 2 (ECL2), which stabilizes movement of transmembrane 3 (TM3) and a series of rearrangements that connect the extracellular-facing cavity to Glu-145, a residue only conserved in proton-sensing G-protein coupled receptors. Proton-sensing G-protein coupled receptor activated by extracellular pH, which is required to monitor pH changes and generate adaptive reactions. Activated by an optimal pH of 6.8-7.2. Ligand binding causes a conformation change that triggers signaling via guanine nucleotide-binding proteins (G proteins) and modulates the activity of downstream effectors, such as adenylate cyclase. GPR4 is mainly coupled to G(s) G proteins and mediates activation of adenylate cyclase activity. May also couple with G(q) and G(12)/G(13) G proteins. Acts as a key regulator of respiratory sensitivity to CO2/H(+) in brain retrotrapezoid nucleus neurons: acts by mediating detection of protons generated by the formation of carbonic acid in the blood, an important mechanism to impulse to breathe. Also acts as a regulator of acid secretion in the kidney collecting duct by maintaining acid-base homeostasis in the kidney. Acidosis-induced GPR4 activation increases paracellular gap formation and permeability of vascular endothelial cells, possibly through the G(12)/G(13)/Rho GTPase signaling pathway. This is G-prodeshotein coupled receptor 4 from Homo sapiens (Human).